We begin with the raw amino-acid sequence, 427 residues long: Amino acid transporter AVT3A (427 aa).

The segment at 1 to 35 is disordered; it reads MRYDQEAGSSSHSLPSGSSSHSLPPTEDTPLLGPR. The Cytoplasmic segment spans residues 1–42; it reads MRYDQEAGSSSHSLPSGSSSHSLPPTEDTPLLGPRTLSSQPK. The segment covering 8 to 24 has biased composition (low complexity); it reads GSSSHSLPSGSSSHSLP. A helical transmembrane segment spans residues 43 to 63; the sequence is TFANVFIAIVGAGVLGLPYTF. The Vacuolar portion of the chain corresponds to 64–69; it reads KKTGWL. The chain crosses the membrane as a helical span at residues 70–90; it reads LGLLTLLFVSSLTFFCMMLLV. Residues 91–122 lie on the Cytoplasmic side of the membrane; sequence HTRRKLESLSGFNSITSFGDLGESVCGPAGRL. Residues 123–143 traverse the membrane as a helical segment; it reads VVDVMLVLSQSGFCVSYLIFV. At 144–157 the chain is on the vacuolar side; the sequence is ATTMANLLSRGTEH. Residues 158 to 178 traverse the membrane as a helical segment; it reads ILGLDAASIYLWGCFPFQLGL. The Cytoplasmic segment spans residues 179–186; it reads NSIPSLTH. Residues 187 to 207 form a helical membrane-spanning segment; sequence LAPLSIFADIVDVAATLVVMV. Over 208 to 227 the chain is Vacuolar; it reads QDVFIFLKRRPPLRVFGGVS. Residues 228-248 traverse the membrane as a helical segment; sequence VFFYGLGVAVYAFEGIGMVLP. Over 249–262 the chain is Cytoplasmic; that stretch reads LELEAKYKDKFGRA. A helical membrane pass occupies residues 263–283; the sequence is LGLAMGLISIMYGAFGLLGYM. Topologically, residues 284–300 are vacuolar; sequence AYGEETKDIITTNLGTG. Residues 301–321 form a helical membrane-spanning segment; it reads VVSTLVQLGLAINLFFTFPLM. The Cytoplasmic segment spans residues 322-339; that stretch reads MQPVYEVVERRLCSSRYS. A helical transmembrane segment spans residues 340–360; that stretch reads VWVRWATVLVVTLVALLVPNF. The Vacuolar portion of the chain corresponds to 361–362; it reads AD. A helical transmembrane segment spans residues 363–383; sequence FLSLVGSSVCVVLGFVLPSLF. Topologically, residues 384-396 are cytoplasmic; the sequence is HLQAFKNELSITR. The chain crosses the membrane as a helical span at residues 397–417; the sequence is IVVDVLVFLIGVMIAITGTWT. Topologically, residues 418–427 are vacuolar; that stretch reads AVHEILTSKA.

It belongs to the amino acid/polyamine transporter 2 family. Amino acid/auxin permease (AAAP) (TC 2.A.18.8) subfamily. Ubiquitous.

The protein resides in the vacuole membrane. Functionally, translocates preferentially neutral amino acids and to a lesser extent aromatic amino acids from the vacuole to the cytoplasm. Requires ATP for function. This Arabidopsis thaliana (Mouse-ear cress) protein is Amino acid transporter AVT3A.